Here is a 909-residue protein sequence, read N- to C-terminus: Probable DNA-directed RNA polymerase subunit beta (909 aa).

It belongs to the RNA polymerase beta chain family.

It carries out the reaction RNA(n) + a ribonucleoside 5'-triphosphate = RNA(n+1) + diphosphate. Required for late and very late gene expression. May be a component of the novel RNA polymerase activity induced by baculovirus infection. The protein is Probable DNA-directed RNA polymerase subunit beta (LEF-8) of Lepidoptera (butterflies and moths).